The following is a 150-amino-acid chain: Large ribosomal subunit protein bL9 (150 aa).

The protein belongs to the bacterial ribosomal protein bL9 family.

In terms of biological role, binds to the 23S rRNA. This Streptococcus agalactiae serotype Ia (strain ATCC 27591 / A909 / CDC SS700) protein is Large ribosomal subunit protein bL9.